A 965-amino-acid chain; its full sequence is PWWP domain-containing protein 4 (965 aa).

In terms of domain architecture, PWWP spans 135-196 (VGDMVWGKVK…PAELIPFEPH (62 aa)). Residues 437-455 (MNFTSSSGNIPGKKSSVSK) are compositionally biased toward polar residues. 4 disordered regions span residues 437–507 (MNFT…KSSL), 526–577 (VVKR…KSSQ), 649–708 (SAKT…SLAP), and 905–927 (LSSQDSEPKPVNNQVDHVEPPLD). 2 stretches are compositionally biased toward basic and acidic residues: residues 456 to 474 (LSRDDDKGLAQESDVRMGE) and 481 to 495 (DQEKFEPMKSLKQDE). Polar residues predominate over residues 496–507 (TGTNSRSNKSSL). Residues 546–553 (KKKEYVSE) carry the Nuclear localization signal motif. Over residues 549 to 563 (EYVSELNRDTPDKRK) the composition is skewed to basic and acidic residues. Residues 657-676 (NEQSKAGRNRISSDSQQDVP) are compositionally biased toward polar residues. Positions 691-702 (ASDKKTNQDATK) are enriched in basic and acidic residues. The span at 905 to 919 (LSSQDSEPKPVNNQV) shows a compositional bias: polar residues.

It belongs to the PDP family. In terms of assembly, component of the PRC2 (polycomb repressive complex 2) complex which regulates histone methylation on histone H3K27.

It localises to the nucleus. In terms of biological role, may influence gene expression by regulating the function of the PRC2 complex and modulating H3K27me3 level. The sequence is that of PWWP domain-containing protein 4 from Arabidopsis thaliana (Mouse-ear cress).